Consider the following 231-residue polypeptide: Phosphatidylserine decarboxylase proenzyme (231 aa).

Catalysis depends on S188, which acts as the Schiff-base intermediate with substrate; via pyruvic acid. Position 188 is a pyruvic acid (Ser); by autocatalysis (S188).

Belongs to the phosphatidylserine decarboxylase family. PSD-A subfamily. As to quaternary structure, heterodimer of a large membrane-associated beta subunit and a small pyruvoyl-containing alpha subunit. The cofactor is pyruvate. In terms of processing, is synthesized initially as an inactive proenzyme. Formation of the active enzyme involves a self-maturation process in which the active site pyruvoyl group is generated from an internal serine residue via an autocatalytic post-translational modification. Two non-identical subunits are generated from the proenzyme in this reaction, and the pyruvate is formed at the N-terminus of the alpha chain, which is derived from the carboxyl end of the proenzyme. The post-translation cleavage follows an unusual pathway, termed non-hydrolytic serinolysis, in which the side chain hydroxyl group of the serine supplies its oxygen atom to form the C-terminus of the beta chain, while the remainder of the serine residue undergoes an oxidative deamination to produce ammonia and the pyruvoyl prosthetic group on the alpha chain.

The protein localises to the cell membrane. The enzyme catalyses a 1,2-diacyl-sn-glycero-3-phospho-L-serine + H(+) = a 1,2-diacyl-sn-glycero-3-phosphoethanolamine + CO2. The protein operates within phospholipid metabolism; phosphatidylethanolamine biosynthesis; phosphatidylethanolamine from CDP-diacylglycerol: step 2/2. In terms of biological role, catalyzes the formation of phosphatidylethanolamine (PtdEtn) from phosphatidylserine (PtdSer). The sequence is that of Phosphatidylserine decarboxylase proenzyme from Rickettsia rickettsii (strain Iowa).